A 275-amino-acid chain; its full sequence is Large ribosomal subunit protein uL2c (275 aa).

The tract at residues 224 to 263 (VMNPVDHPHGGGEGRAPIGRKRPLTPWGRPALGKKSRKNH) is disordered.

Belongs to the universal ribosomal protein uL2 family. Part of the 50S ribosomal subunit.

The protein resides in the plastid. The protein localises to the chloroplast. The sequence is that of Large ribosomal subunit protein uL2c (rpl2) from Chaetosphaeridium globosum (Charophycean green alga).